Consider the following 277-residue polypeptide: Co-chaperone protein DjlA (277 aa).

The Periplasmic portion of the chain corresponds to 1–4 (MWGK). A helical membrane pass occupies residues 5–28 (ILGAFFGFLLGGPFGLLLGLFLGH). Residues 29-277 (KFDKARRNVY…DMIRKEKGFK (249 aa)) lie on the Cytoplasmic side of the membrane. Residues 211-277 (DAYEVLGVTE…DMIRKEKGFK (67 aa)) form the J domain.

Homodimer.

It is found in the cell inner membrane. Its function is as follows. Regulatory DnaK co-chaperone. Direct interaction between DnaK and DjlA is needed for the induction of the wcaABCDE operon, involved in the synthesis of a colanic acid polysaccharide capsule, possibly through activation of the RcsB/RcsC phosphotransfer signaling pathway. The colanic acid capsule may help the bacterium survive conditions outside the host. The protein is Co-chaperone protein DjlA of Photobacterium profundum (strain SS9).